A 183-amino-acid polypeptide reads, in one-letter code: Ribosome rescue factor SmrB (183 aa).

A Smr domain is found at 98–173 (LDLHGLTQLQ…GDAALLVLIE (76 aa)).

It belongs to the SmrB family. As to quaternary structure, associates with collided ribosomes, but not with correctly translating polysomes.

Its function is as follows. Acts as a ribosome collision sensor. Detects stalled/collided disomes (pairs of ribosomes where the leading ribosome is stalled and a second ribosome has collided with it) and endonucleolytically cleaves mRNA at the 5' boundary of the stalled ribosome. Stalled/collided disomes form a new interface (primarily via the 30S subunits) that binds SmrB. Cleaved mRNA becomes available for tmRNA ligation, leading to ribosomal subunit dissociation and rescue of stalled ribosomes. This Escherichia coli (strain 55989 / EAEC) protein is Ribosome rescue factor SmrB.